The sequence spans 517 residues: Acetyl-coenzyme A carboxylase carboxyl transferase subunit beta, chloroplastic (517 aa).

Basic and acidic residues-rich tracts occupy residues 1-17 (MKPT…KSNE), 24-41 (GDNK…KSNE), 48-65 (GDNK…KSNE), and 72-81 (GDKQKDKKDG). 2 disordered regions span residues 1–179 (MKPT…KEEE) and 204–234 (KHRD…DSEA). Acidic residues predominate over residues 87–131 (YDDEYEEDLEYDDEYEEDLEYDDEYEEDLEYDDEEYDDEYEEDLE). 2 stretches are compositionally biased toward basic and acidic residues: residues 132 to 179 (GDNK…KEEE) and 209 to 229 (KSVP…RDTD). A CoA carboxyltransferase N-terminal domain is found at 243 to 514 (LWVHCKLCSG…NSQVINIYNY (272 aa)). Positions 247, 250, 266, and 269 each coordinate Zn(2+). The segment at 247 to 269 (CKLCSGFNYKKILKSKNNVCEQC) adopts a C4-type zinc-finger fold.

Belongs to the AccD/PCCB family. Acetyl-CoA carboxylase is a heterohexamer composed of biotin carboxyl carrier protein, biotin carboxylase and 2 subunits each of ACCase subunit alpha and ACCase plastid-coded subunit beta (accD). The cofactor is Zn(2+).

It localises to the plastid. The protein resides in the chloroplast stroma. The enzyme catalyses N(6)-carboxybiotinyl-L-lysyl-[protein] + acetyl-CoA = N(6)-biotinyl-L-lysyl-[protein] + malonyl-CoA. It functions in the pathway lipid metabolism; malonyl-CoA biosynthesis; malonyl-CoA from acetyl-CoA: step 1/1. In terms of biological role, component of the acetyl coenzyme A carboxylase (ACC) complex. Biotin carboxylase (BC) catalyzes the carboxylation of biotin on its carrier protein (BCCP) and then the CO(2) group is transferred by the transcarboxylase to acetyl-CoA to form malonyl-CoA. This chain is Acetyl-coenzyme A carboxylase carboxyl transferase subunit beta, chloroplastic, found in Oenothera elata subsp. hookeri (Hooker's evening primrose).